The following is a 458-amino-acid chain: Ig mu chain C region secreted form (458 aa).

Residues 1–106 are CH1; that stretch reads VSLSSPTLYP…SNRDLRVSFP (106 aa). Residues Cys28 and Cys90 are joined by a disulfide bond. N-linked (GlcNAc...) asparagine glycosylation is found at Asn46 and Asn114. A CH2 region spans residues 107-222; sequence VDSELPPNVS…VSMSSECSTT (116 aa). A disulfide bridge connects residues Cys137 and Cys200. N-linked (GlcNAc...) asparagine glycans are attached at residues Asn212, Asn261, Asn277, and Asn284. A CH3 region spans residues 223–327; the sequence is PSPGIQVFPI…PLKHTISKSR (105 aa). Cystine bridges form between Cys249–Cys308 and Cys356–Cys418. Residues 328–458 form a CH4 region; the sequence is EVAKHPPAVY…IMSDTASTCY (131 aa). N-linked (GlcNAc...) asparagine glycosylation occurs at Asn445.

It is found in the secreted. This Oryctolagus cuniculus (Rabbit) protein is Ig mu chain C region secreted form.